The primary structure comprises 101 residues: Chaperone modulatory protein CbpM (101 aa).

The protein belongs to the CbpM family.

Functionally, interacts with CbpA and inhibits both the DnaJ-like co-chaperone activity and the DNA binding activity of CbpA. Together with CbpA, modulates the activity of the DnaK chaperone system. Does not inhibit the co-chaperone activity of DnaJ. The polypeptide is Chaperone modulatory protein CbpM (Salmonella paratyphi A (strain ATCC 9150 / SARB42)).